We begin with the raw amino-acid sequence, 193 residues long: Mesogenin-1 (193 aa).

The segment at 34–59 is disordered; sequence GPFELNQASPSQSLSPAPSLESYSSS. A compositionally biased stretch (low complexity) spans 40–59; sequence QASPSQSLSPAPSLESYSSS. The bHLH domain maps to 124–178; that stretch reads QRRRKASEREKLRMRTLADALHTLRNYLPPVYSQRGQPLTKIQTLKYTIKYIGEL.

It is found in the nucleus. Involved in specifying the paraxial, but not dorsal, mesoderm. May regulate the expression of T-box transcription factors required for mesoderm formation and differentiation. In Homo sapiens (Human), this protein is Mesogenin-1 (MSGN1).